The following is an 82-amino-acid chain: Putative antitoxin RelB1 (82 aa).

Its function is as follows. Antitoxin component of a type II toxin-antitoxin (TA) system. Its cognate toxin is RelE1 (Potential). The polypeptide is Putative antitoxin RelB1 (relB1) (Methanocaldococcus jannaschii (strain ATCC 43067 / DSM 2661 / JAL-1 / JCM 10045 / NBRC 100440) (Methanococcus jannaschii)).